A 509-amino-acid polypeptide reads, in one-letter code: Protein OS-9 homolog (509 aa).

An N-terminal signal peptide occupies residues 1 to 23; it reads MRRQSRIVASLLVLACASSGAFA. Polar residues predominate over residues 64 to 74; the sequence is SPDLNDISEQT. Residues 64 to 91 form a disordered region; that stretch reads SPDLNDISEQTPLKDESEESIRDGSSGE. Residues 75–91 are compositionally biased toward basic and acidic residues; that stretch reads PLKDESEESIRDGSSGE. Residue Asn-120 is glycosylated (N-linked (GlcNAc...) asparagine). The region spanning 151–291 is the MRH domain; that stretch reads GKCLYYISGW…LIYTPRLCND (141 aa). Cys-153 and Cys-166 form a disulfide bridge. A mannooligosaccharide derivative contacts are provided by Trp-160, Trp-161, Gln-173, Asp-246, Arg-252, Glu-273, and Tyr-279. Cystine bridges form between Cys-245–Cys-277 and Cys-260–Cys-289. The segment at 433-509 is disordered; the sequence is GVVDTDEDEE…GSEEIFKDEL (77 aa). Residues 436-451 show a composition bias toward acidic residues; sequence DTDEDEEDGYENEEGE. Residues 452-461 are compositionally biased toward basic and acidic residues; the sequence is TDKREQRENT. A compositionally biased stretch (acidic residues) spans 489–502; the sequence is RSEDGEDPDVDGSE. Residues 506-509 carry the Prevents secretion from ER motif; it reads KDEL.

The protein belongs to the OS-9 family. Interacts with missfolded ER lumenal proteins.

The protein localises to the endoplasmic reticulum membrane. In terms of biological role, lectin involved in the quality control of the secretory pathway. As a member of the endoplasmic reticulum-associated degradation lumenal (ERAD-L) surveillance system, targets misfolded endoplasmic reticulum lumenal glycoproteins for degradation. The chain is Protein OS-9 homolog (yos9) from Emericella nidulans (strain FGSC A4 / ATCC 38163 / CBS 112.46 / NRRL 194 / M139) (Aspergillus nidulans).